The sequence spans 208 residues: Thiamine-phosphate synthase (208 aa).

4-amino-2-methyl-5-(diphosphooxymethyl)pyrimidine contacts are provided by residues 36-40 and D68; that span reads QLRMK. Mg(2+)-binding residues include D69 and D88. 4-amino-2-methyl-5-(diphosphooxymethyl)pyrimidine is bound at residue T107. Residue 133-135 coordinates 2-[(2R,5Z)-2-carboxy-4-methylthiazol-5(2H)-ylidene]ethyl phosphate; that stretch reads TTT. Residue K136 participates in 4-amino-2-methyl-5-(diphosphooxymethyl)pyrimidine binding. A 2-[(2R,5Z)-2-carboxy-4-methylthiazol-5(2H)-ylidene]ethyl phosphate-binding site is contributed by G169.

It belongs to the thiamine-phosphate synthase family. Requires Mg(2+) as cofactor.

It catalyses the reaction 2-[(2R,5Z)-2-carboxy-4-methylthiazol-5(2H)-ylidene]ethyl phosphate + 4-amino-2-methyl-5-(diphosphooxymethyl)pyrimidine + 2 H(+) = thiamine phosphate + CO2 + diphosphate. The enzyme catalyses 2-(2-carboxy-4-methylthiazol-5-yl)ethyl phosphate + 4-amino-2-methyl-5-(diphosphooxymethyl)pyrimidine + 2 H(+) = thiamine phosphate + CO2 + diphosphate. It carries out the reaction 4-methyl-5-(2-phosphooxyethyl)-thiazole + 4-amino-2-methyl-5-(diphosphooxymethyl)pyrimidine + H(+) = thiamine phosphate + diphosphate. It participates in cofactor biosynthesis; thiamine diphosphate biosynthesis; thiamine phosphate from 4-amino-2-methyl-5-diphosphomethylpyrimidine and 4-methyl-5-(2-phosphoethyl)-thiazole: step 1/1. Its function is as follows. Condenses 4-methyl-5-(beta-hydroxyethyl)thiazole monophosphate (THZ-P) and 2-methyl-4-amino-5-hydroxymethyl pyrimidine pyrophosphate (HMP-PP) to form thiamine monophosphate (TMP). The protein is Thiamine-phosphate synthase of Phocaeicola vulgatus (strain ATCC 8482 / DSM 1447 / JCM 5826 / CCUG 4940 / NBRC 14291 / NCTC 11154) (Bacteroides vulgatus).